A 348-amino-acid polypeptide reads, in one-letter code: UDP-3-O-acylglucosamine N-acyltransferase (348 aa).

The active-site Proton acceptor is the His-241.

This sequence belongs to the transferase hexapeptide repeat family. LpxD subfamily. As to quaternary structure, homotrimer.

It catalyses the reaction a UDP-3-O-[(3R)-3-hydroxyacyl]-alpha-D-glucosamine + a (3R)-hydroxyacyl-[ACP] = a UDP-2-N,3-O-bis[(3R)-3-hydroxyacyl]-alpha-D-glucosamine + holo-[ACP] + H(+). The protein operates within bacterial outer membrane biogenesis; LPS lipid A biosynthesis. Its function is as follows. Catalyzes the N-acylation of UDP-3-O-acylglucosamine using 3-hydroxyacyl-ACP as the acyl donor. Is involved in the biosynthesis of lipid A, a phosphorylated glycolipid that anchors the lipopolysaccharide to the outer membrane of the cell. The chain is UDP-3-O-acylglucosamine N-acyltransferase from Neisseria meningitidis serogroup C (strain 053442).